We begin with the raw amino-acid sequence, 164 residues long: Putative pre-16S rRNA nuclease (164 aa).

Belongs to the YqgF nuclease family.

It localises to the cytoplasm. Functionally, could be a nuclease involved in processing of the 5'-end of pre-16S rRNA. The polypeptide is Putative pre-16S rRNA nuclease (Rhizobium rhizogenes (strain K84 / ATCC BAA-868) (Agrobacterium radiobacter)).